The sequence spans 75 residues: Phi-liotoxin-Lw1a (75 aa).

The signal sequence occupies residues 1-25 (MNFATKVSLLLLAIAVIVIVEGGEG). A propeptide spanning residues 26–39 (DSWFEEHEESDTER) is cleaved from the precursor. 2 cysteine pairs are disulfide-bonded: cysteine 50–cysteine 62 and cysteine 56–cysteine 68.

As to expression, expressed by the venom gland.

The protein localises to the secreted. Functionally, affects the activity of both ryanodine-sensitive calcium-release channels RyR1 and RyR2 with high potency. At lower concentrations the toxin increases full openings of the RyRs, and at higher concentrations it inhibits full openings and induce openings to subconductance levels and reduces the number of full conductance openings. The different actions may be attributed to the toxins binding at different sites on the RyRs, with binding at a high-affinity site mediating the increase in full openings and the induction of subconductance states evoked upon binding to a lower-affinity site. Insect-selective toxin that provokes a dose-dependent contractile paralysis in crickets and blowfly larvae, followed by death. This is Phi-liotoxin-Lw1a from Hormurus waigiensis (Australian rainforest scorpion).